The primary structure comprises 622 residues: Chaperone protein HscA homolog (622 aa).

It belongs to the heat shock protein 70 family.

Functionally, chaperone involved in the maturation of iron-sulfur cluster-containing proteins. Has a low intrinsic ATPase activity which is markedly stimulated by HscB. In Acidovorax sp. (strain JS42), this protein is Chaperone protein HscA homolog.